Reading from the N-terminus, the 450-residue chain is Probable ECA polymerase (450 aa).

Transmembrane regions (helical) follow at residues 6-26, 37-57, 63-83, 118-138, 155-175, 181-201, 207-227, 228-248, 341-361, 378-398, and 410-430; these read FSGL…LTWF, VFFS…TSVL, VGVA…CFYA, VILM…NGFL, GVAL…VYFL, AWLF…MIVG, IIIA…ISLW, MLAA…LKRY, LVVM…GLII, YKAA…IVLA, and VFFI…YWLF.

Belongs to the WzyE family. As to quaternary structure, probably part of a complex composed of WzxE, WzyE and WzzE.

The protein localises to the cell inner membrane. Its pathway is bacterial outer membrane biogenesis; enterobacterial common antigen biosynthesis. Functionally, probably involved in the polymerization of enterobacterial common antigen (ECA) trisaccharide repeat units. The chain is Probable ECA polymerase from Escherichia coli O7:K1 (strain IAI39 / ExPEC).